Consider the following 360-residue polypeptide: Fe(3+) ions import ATP-binding protein FbpC (360 aa).

The ABC transporter domain occupies 4-236 (LEIKGLHKHY…PKDRMIAEFL (233 aa)). 36–43 (GPSGCGKT) lines the ATP pocket.

Belongs to the ABC transporter superfamily. Fe(3+) ion importer (TC 3.A.1.10) family. As to quaternary structure, the complex is composed of two ATP-binding proteins (FbpC), two transmembrane proteins (FbpB) and a solute-binding protein (FbpA).

The protein resides in the cell inner membrane. The catalysed reaction is Fe(3+)(out) + ATP + H2O = Fe(3+)(in) + ADP + phosphate + H(+). Functionally, part of the ABC transporter complex FbpABC involved in Fe(3+) ions import. Responsible for energy coupling to the transport system. The chain is Fe(3+) ions import ATP-binding protein FbpC from Mesorhizobium japonicum (strain LMG 29417 / CECT 9101 / MAFF 303099) (Mesorhizobium loti (strain MAFF 303099)).